A 422-amino-acid polypeptide reads, in one-letter code: UDP-N-acetyl-D-glucosamine 6-dehydrogenase (422 aa).

5 residues coordinate NAD(+): Val14, Asp32, Arg37, Thr83, and Thr118. Cys258 acts as the Nucleophile in catalysis. Arg329 provides a ligand contact to NAD(+).

This sequence belongs to the UDP-glucose/GDP-mannose dehydrogenase family.

The enzyme catalyses UDP-N-acetyl-alpha-D-glucosamine + 2 NAD(+) + H2O = UDP-2-acetamido-2-deoxy-alpha-D-glucuronate + 2 NADH + 3 H(+). Its pathway is bacterial outer membrane biogenesis; LPS O-antigen biosynthesis. Requires either potassium or ammonium-containing salts for activity. Its function is as follows. Dehydrogenase required for the biosynthesis of the B-band O antigen of serotype O6 lipopolysaccharide. Is also required for flagellin glycosylation. Catalyzes the conversion of UDP-N-acetylglucosamine (UDP-GlcNAc) to UDP-N-acetylglucosaminuronic acid (UDP-GlcNAcA). Can also catalyze the conversion of UDP-N-acetyl-galactosamine (UDP-GalNAc) to UDP-N-acetylgalactosaminuronic acid (UDP-GalNAcA), with low efficiency. Can use NAD(+) or NADP(+), with a preference for NAD(+). This chain is UDP-N-acetyl-D-glucosamine 6-dehydrogenase, found in Pseudomonas aeruginosa.